A 369-amino-acid polypeptide reads, in one-letter code: Transcription initiation factor IIA large subunit (369 aa).

2 stretches are compositionally biased toward polar residues: residues 113–210 and 218–233; these read HGNS…QNSP and TESS…NDVP. The tract at residues 113–248 is disordered; that stretch reads HGNSNYYSPP…IHDLDDAGSP (136 aa). At serine 249 the chain carries Phosphoserine. Residues 282–319 are disordered; it reads IEDNEDEKKPPVDTPSDEAINSDLDDPDSDEAPETEEG. The segment covering 304–319 has biased composition (acidic residues); the sequence is DLDDPDSDEAPETEEG.

The protein belongs to the TFIIA subunit 1 family. In terms of assembly, TFIIA is a heterodimer of the large subunit and the small subunit gamma.

The protein localises to the nucleus. Its function is as follows. TFIIA is a component of the transcription machinery of RNA polymerase II and plays an important role in transcriptional activation. TFIIA in a complex with tbp mediates transcriptional activity. The protein is Transcription initiation factor IIA large subunit of Schizosaccharomyces pombe (strain 972 / ATCC 24843) (Fission yeast).